Reading from the N-terminus, the 894-residue chain is Probable cytoplasmic aconitate hydratase (894 aa).

Substrate-binding positions include Gln-87 and 207–209; that span reads DSH. Residues Cys-438, Cys-504, and Cys-507 each coordinate [4Fe-4S] cluster. Substrate is bound by residues Arg-537, Arg-542, and 781 to 782; that span reads SR.

Belongs to the aconitase/IPM isomerase family. [4Fe-4S] cluster is required as a cofactor.

Its subcellular location is the cytoplasm. It is found in the cytosol. The catalysed reaction is citrate = D-threo-isocitrate. In terms of biological role, catalyzes the isomerization of citrate to isocitrate via cis-aconitate. The sequence is that of Probable cytoplasmic aconitate hydratase (aco1) from Dictyostelium discoideum (Social amoeba).